The chain runs to 772 residues: Polyribonucleotide nucleotidyltransferase (772 aa).

D486 and D492 together coordinate Mg(2+). The KH domain occupies 553 to 612; sequence PRIETLQIDKSKIRDVIGTGGKVIREIVATTGAKVDIDDEGLIKISSSDLTQIEAAKNWI. Residues 622 to 690 form the S1 motif domain; that stretch reads GKIYKGKVVN…QRGKVRLSMR (69 aa). Residues 695 to 772 form a disordered region; that stretch reads ETGAELEDTR…HMPAFLKSDD (78 aa). A compositionally biased stretch (basic and acidic residues) spans 701-760; the sequence is EDTRPPREPREPRGDRGDRGDRGDRRGPRGDRGPRREGGDRGPRREGGDRPRRDRDDGPA.

The protein belongs to the polyribonucleotide nucleotidyltransferase family. The cofactor is Mg(2+).

It localises to the cytoplasm. It catalyses the reaction RNA(n+1) + phosphate = RNA(n) + a ribonucleoside 5'-diphosphate. Functionally, involved in mRNA degradation. Catalyzes the phosphorolysis of single-stranded polyribonucleotides processively in the 3'- to 5'-direction. The sequence is that of Polyribonucleotide nucleotidyltransferase from Novosphingobium aromaticivorans (strain ATCC 700278 / DSM 12444 / CCUG 56034 / CIP 105152 / NBRC 16084 / F199).